The sequence spans 134 residues: Endoribonuclease YbeY (134 aa).

Zn(2+) contacts are provided by H94, H98, and H104.

It belongs to the endoribonuclease YbeY family. It depends on Zn(2+) as a cofactor.

It localises to the cytoplasm. Its function is as follows. Single strand-specific metallo-endoribonuclease involved in late-stage 70S ribosome quality control and in maturation of the 3' terminus of the 16S rRNA. The protein is Endoribonuclease YbeY of Campylobacter fetus subsp. fetus (strain 82-40).